We begin with the raw amino-acid sequence, 358 residues long: Fructose-bisphosphate aldolase 5, cytosolic (358 aa).

Ser2 carries the post-translational modification N-acetylserine. Arg39 is a substrate binding site. Cys68 bears the S-glutathionyl cysteine; transient mark. Cys173 is subject to S-glutathionyl cysteine; transient; alternate. Residue Cys173 is modified to S-nitrosocysteine; transient; alternate. Glu183 acts as the Proton acceptor in catalysis. Residue Lys225 is the Schiff-base intermediate with dihydroxyacetone-P of the active site. Substrate-binding positions include Ser266–Gly268 and Arg298. Ser350 is modified (phosphoserine).

Belongs to the class I fructose-bisphosphate aldolase family. Homotetramer. Interacts with TRX3. Post-translationally, S-glutathionylated at Cys-68 and Cys-173. S-nitrosylated at Cys-173. In terms of tissue distribution, expressed in rosette leaves and cauline leaves.

It is found in the cytoplasm. The protein resides in the cytosol. It catalyses the reaction beta-D-fructose 1,6-bisphosphate = D-glyceraldehyde 3-phosphate + dihydroxyacetone phosphate. Its pathway is carbohydrate degradation; glycolysis; D-glyceraldehyde 3-phosphate and glycerone phosphate from D-glucose: step 4/4. Fructose-bisphosphate aldolase that plays a key role in glycolysis and gluconeogenesis. This chain is Fructose-bisphosphate aldolase 5, cytosolic, found in Arabidopsis thaliana (Mouse-ear cress).